Consider the following 385-residue polypeptide: Trans-enoyl reductase tasC (385 aa).

49–52 contacts NADP(+); it reads VDTK. 136–143 provides a ligand contact to substrate; the sequence is NSWYTVAW. NADP(+) contacts are provided by residues 196–199, 219–222, and 284–285; these read SSST, SARN, and LD. 305-309 is a binding site for substrate; that stretch reads GPELM. 374 to 375 contributes to the NADP(+) binding site; it reads VS.

It belongs to the zinc-containing alcohol dehydrogenase family. In terms of assembly, monomer.

The catalysed reaction is (2S,4S)-4-hydroxy-4-methylglutamate + 8 malonyl-CoA + 3 S-adenosyl-L-methionine + ATP + 8 NADPH + 11 H(+) = (2S)-3-[(2S)-3,5-dioxo-4-[(2E,4R,6R,8E,10E,12E)-4,6,12-trimethyltetradeca-2,8,10,12-tetraenoyl]pyrrolidin-2-yl]-2-hydroxy-2-methylpropanoate + AMP + 3 S-adenosyl-L-homocysteine + 8 CO2 + diphosphate + 8 NADP(+) + 8 CoA + 6 H2O. The enzyme catalyses (2S,4R)-4-hydroxy-4-methylglutamate + 8 malonyl-CoA + 3 S-adenosyl-L-methionine + ATP + 8 NADPH + 11 H(+) = (2R)-3-[(2S)-3,5-dioxo-4-[(2E,4R,6R,8E,10E,12E)-4,6,12-trimethyltetradeca-2,8,10,12-tetraenoyl]pyrrolidin-2-yl]-2-hydroxy-2-methylpropanoate + AMP + 3 S-adenosyl-L-homocysteine + 8 CO2 + diphosphate + 8 NADP(+) + 8 CoA + 6 H2O. Its pathway is secondary metabolite biosynthesis. Its function is as follows. Trans-enoyl reductase; part of the gene cluster that mediates the biosynthesis of the tetramic acids Sch210971 and Sch210972, potential anti-HIV fungal natural product that contain a decalin core. The PKS module of tasS together with the enoylreductase tasC catalyze the formation of the polyketide unit which is then conjugated to 4-hydroxyl-4-methyl glutamate (HMG) by the condensation domain of the tasS NRPS module. One unique structural feature of Sch210971 and Sch210972 is the tetramic acid motif proposed to be derived from the non-proteinogenic amino acid HMG, by a Dieckmann-type condensation catalyzed by the reductase domain of tasS. The aldolase tasA catalyzes the aldol condensation of 2 molecules of pyruvic acid to yield the intermediate 4-hydroxyl-4-methyl-2-oxoglutarate (HMOG), which can then be stereoselectively transaminated, may be by tasG, to form HMG. The Diels-Alderase tas3 then uses the Dieckmann product of tasS as substrate and catalyzes the Diels-Alder cycloaddition to form the decalin ring of Sch210971 and Sch210972. In Hapsidospora irregularis, this protein is Trans-enoyl reductase tasC.